Here is a 298-residue protein sequence, read N- to C-terminus: Probable 3-hydroxyacyl-CoA dehydrogenase F54C8.1 (298 aa).

It belongs to the 3-hydroxyacyl-CoA dehydrogenase family. In terms of assembly, homodimer.

It is found in the mitochondrion matrix. The catalysed reaction is a (3S)-3-hydroxyacyl-CoA + NAD(+) = a 3-oxoacyl-CoA + NADH + H(+). It functions in the pathway lipid metabolism; fatty acid beta-oxidation. In Caenorhabditis elegans, this protein is Probable 3-hydroxyacyl-CoA dehydrogenase F54C8.1.